A 160-amino-acid polypeptide reads, in one-letter code: Transcription antitermination protein NusB (160 aa).

Belongs to the NusB family.

Its function is as follows. Involved in transcription antitermination. Required for transcription of ribosomal RNA (rRNA) genes. Binds specifically to the boxA antiterminator sequence of the ribosomal RNA (rrn) operons. This chain is Transcription antitermination protein NusB, found in Rhizobium etli (strain CIAT 652).